We begin with the raw amino-acid sequence, 382 residues long: Chaperone protein DnaJ (382 aa).

Residues 5 to 70 (DYYEVLGVSR…DKKAAYDRYG (66 aa)) enclose the J domain. The CR-type zinc-finger motif lies at 141–219 (GVQKTINVPA…CHGAGRVEKE (79 aa)). 8 residues coordinate Zn(2+): cysteine 154, cysteine 157, cysteine 171, cysteine 174, cysteine 193, cysteine 196, cysteine 207, and cysteine 210. CXXCXGXG motif repeat units lie at residues 154-161 (CDACKGTG), 171-178 (CPTCSGMG), 193-200 (CPTCNGMG), and 207-214 (CKVCHGAG).

Belongs to the DnaJ family. As to quaternary structure, homodimer. Requires Zn(2+) as cofactor.

Its subcellular location is the cytoplasm. Its function is as follows. Participates actively in the response to hyperosmotic and heat shock by preventing the aggregation of stress-denatured proteins and by disaggregating proteins, also in an autonomous, DnaK-independent fashion. Unfolded proteins bind initially to DnaJ; upon interaction with the DnaJ-bound protein, DnaK hydrolyzes its bound ATP, resulting in the formation of a stable complex. GrpE releases ADP from DnaK; ATP binding to DnaK triggers the release of the substrate protein, thus completing the reaction cycle. Several rounds of ATP-dependent interactions between DnaJ, DnaK and GrpE are required for fully efficient folding. Also involved, together with DnaK and GrpE, in the DNA replication of plasmids through activation of initiation proteins. The sequence is that of Chaperone protein DnaJ from Cereibacter sphaeroides (strain ATCC 17023 / DSM 158 / JCM 6121 / CCUG 31486 / LMG 2827 / NBRC 12203 / NCIMB 8253 / ATH 2.4.1.) (Rhodobacter sphaeroides).